The sequence spans 573 residues: Urease subunit alpha 2 (573 aa).

Residues 135-573 (GGMDTHVHYI…ISLNQLYFFS (439 aa)) form the Urease domain. Ni(2+)-binding residues include His140, His142, and Lys223. The residue at position 223 (Lys223) is an N6-carboxylysine. Residue His225 participates in substrate binding. The Ni(2+) site is built by His252 and His278. The active-site Proton donor is the His326. Asp366 contributes to the Ni(2+) binding site.

It belongs to the metallo-dependent hydrolases superfamily. Urease alpha subunit family. Heterotrimer of UreA (gamma), UreB (beta) and UreC (alpha) subunits. Three heterotrimers associate to form the active enzyme. Ni cation serves as cofactor. Post-translationally, carboxylation allows a single lysine to coordinate two nickel ions.

The protein resides in the cytoplasm. It catalyses the reaction urea + 2 H2O + H(+) = hydrogencarbonate + 2 NH4(+). It participates in nitrogen metabolism; urea degradation; CO(2) and NH(3) from urea (urease route): step 1/1. In Brucella melitensis biotype 1 (strain ATCC 23456 / CCUG 17765 / NCTC 10094 / 16M), this protein is Urease subunit alpha 2.